Here is a 1450-residue protein sequence, read N- to C-terminus: Protein TIC 214 (1450 aa).

6 consecutive transmembrane segments (helical) span residues 29-49 (FGLYYGFLTTLPISFSHIVVI), 61-81 (VMAFCGLITGQLCMIGTIYYT), 86-106 (LFIKPHLILLLSIIYSFFYWQ), 132-152 (FFDSFVFQILNPILLPTPIFF), 166-186 (LNFFLSFFIGSLIGNFLFFNA), and 213-233 (IIPIVFCICLIPIAKYSHIPF).

Belongs to the TIC214 family. In terms of assembly, part of the Tic complex.

It localises to the plastid. Its subcellular location is the chloroplast inner membrane. Functionally, involved in protein precursor import into chloroplasts. May be part of an intermediate translocation complex acting as a protein-conducting channel at the inner envelope. The sequence is that of Protein TIC 214 from Chaetosphaeridium globosum (Charophycean green alga).